The chain runs to 143 residues: Anti-sigma F factor (143 aa).

This sequence belongs to the anti-sigma-factor family.

It carries out the reaction L-seryl-[protein] + ATP = O-phospho-L-seryl-[protein] + ADP + H(+). The catalysed reaction is L-threonyl-[protein] + ATP = O-phospho-L-threonyl-[protein] + ADP + H(+). In terms of biological role, binds to sigma F and blocks its ability to form an RNA polymerase holoenzyme (E-sigma F). Phosphorylates SpoIIAA on a serine residue. This phosphorylation may enable SpoIIAA to act as an anti-anti-sigma factor that counteracts SpoIIAB and thus releases sigma F from inhibition. The protein is Anti-sigma F factor of Caldanaerobacter subterraneus subsp. tengcongensis (strain DSM 15242 / JCM 11007 / NBRC 100824 / MB4) (Thermoanaerobacter tengcongensis).